A 117-amino-acid chain; its full sequence is Large ribosomal subunit protein uL18 (117 aa).

This sequence belongs to the universal ribosomal protein uL18 family. Part of the 50S ribosomal subunit; part of the 5S rRNA/L5/L18/L25 subcomplex. Contacts the 5S and 23S rRNAs.

Its function is as follows. This is one of the proteins that bind and probably mediate the attachment of the 5S RNA into the large ribosomal subunit, where it forms part of the central protuberance. The polypeptide is Large ribosomal subunit protein uL18 (Idiomarina loihiensis (strain ATCC BAA-735 / DSM 15497 / L2-TR)).